We begin with the raw amino-acid sequence, 1039 residues long: Potassium-transporting ATPase alpha chain 2 (1039 aa).

Residues 1–102 (MHQKTPEIYS…NSLTPPKQTP (102 aa)) lie on the Cytoplasmic side of the membrane. A helical transmembrane segment spans residues 103 to 123 (EIVKFLKQMVGGFSILLWVGA). The Lumenal segment spans residues 124 to 146 (FLCWIAYGIQYSSDKSASLNNVY). A helical transmembrane segment spans residues 147 to 167 (LGCVLGLVVILTGIFAYYQEA). Over 168–303 (KSTNIMSSFN…NEKTPIAIEI (136 aa)) the chain is Cytoplasmic. A helical transmembrane segment spans residues 304-323 (EHFVHIVAGVAVSIGILFFI). At 324–335 (IAVSLKYQVLDS) the chain is on the lumenal side. Residues 336–353 (IIFLIGIIVANVPEGLLA) form a helical membrane-spanning segment. The Cytoplasmic portion of the chain corresponds to 354–787 (TVTVTLSLTA…EEGRLIFDNL (434 aa)). D391 functions as the 4-aspartylphosphate intermediate in the catalytic mechanism. D732 and D736 together coordinate Mg(2+). A helical transmembrane segment spans residues 788 to 807 (KKTIAYSLTKNIAELCPFLI). The Lumenal portion of the chain corresponds to 808–817 (YIIVGLPLPI). Residues 818–838 (GTITILFIDLGTDIIPSIALA) form a helical membrane-spanning segment. Topologically, residues 839 to 858 (YEKAESDIMNRKPRHKNKDR) are cytoplasmic. The chain crosses the membrane as a helical span at residues 859 to 881 (LVNQPLAVYSYLHIGLMQALGAF). Over 882-933 (LVYFTVYAQEGFLPRTLINLRVEWEKDYVNDLKDSYGQEWTRYQREYLEWTG) the chain is Lumenal. The helical transmembrane segment at 934-953 (YTAFFVGILVQQIADLIIRK) threads the bilayer. The Cytoplasmic portion of the chain corresponds to 954-967 (TRRNSIFQQGLFRN). S958 carries the phosphoserine; by PKA modification. The helical transmembrane segment at 968-986 (KVIWVGITSQIIIGLILSY) threads the bilayer. Topologically, residues 987-1001 (GLGSVTALSFTMLRA) are lumenal. Residues 1002–1022 (QYWFVAVPHAILIWVYDEVRK) traverse the membrane as a helical segment. Topologically, residues 1023 to 1039 (LFIRLYPGSWWDKNMYY) are cytoplasmic.

It belongs to the cation transport ATPase (P-type) (TC 3.A.3) family. Type IIC subfamily. The ATPase pump is composed of a catalytic alpha subunit and an auxiliary non-catalytic beta subunit. The alpha subunit pairs with the beta subunit of gastric H(+)/K(+) ATPase ATP4B or the beta subunit of Na(+)/K(+) ATPases ATP1B1 and ATP1B3; this interaction is required for the formation of a functionally active pump and its targeting at the plasma membrane. In terms of tissue distribution, expressed in airway epithelial cells (at protein level). Found in skin and kidney. Detected in prostate basal cells (at protein level). Expression is increased in benign prostate hyperplasia and tumor tissues (at protein level).

The protein resides in the apical cell membrane. The catalysed reaction is K(+)(out) + ATP + H2O + H(+)(in) = K(+)(in) + ADP + phosphate + 2 H(+)(out). It carries out the reaction K(+)(out) + Na(+)(in) + ATP + H2O = K(+)(in) + Na(+)(out) + ADP + phosphate + H(+). The ATPase activity is regulated by monovalent cations and pH. Up-regulated by K(+) ions in a dose-dependent way. Down-regulated by Na(+) ions. Inhibited by Na(+)/K(+)-ATPase inhibitor ouabain and H(+)/K(+)-ATPase inhibitor SCH-28080 with an intermediate sensitivity to completely resistant Na(+)/K(+)-ATPases and highly sensitive H(+)/K(+)-ATPases. In terms of biological role, the catalytic subunit of a H(+)/K(+) ATPase and/or Na(+)/K(+) ATPase pump which transports K(+) ions in exchange for Na(+) and/or H(+) ions across the apical membrane of epithelial cells. Uses ATP as an energy source to pump K(+) ions into the cell while transporting Na(+) and/or H(+) ions to the extracellular compartment. Involved in the maintenance of electrolyte homeostasis through K(+) ion absorption in kidney and colon. In the airway epithelium, may play a primary role in mucus acidification regulating its viscosity and clearance. The sequence is that of Potassium-transporting ATPase alpha chain 2 from Homo sapiens (Human).